Reading from the N-terminus, the 85-residue chain is Large ribosomal subunit protein bL27 (85 aa).

The tract at residues 1–21 (MAHKKGASSSRNGRDSNAQRL) is disordered. Polar residues predominate over residues 7–19 (ASSSRNGRDSNAQ).

The protein belongs to the bacterial ribosomal protein bL27 family.

The chain is Large ribosomal subunit protein bL27 from Beutenbergia cavernae (strain ATCC BAA-8 / DSM 12333 / CCUG 43141 / JCM 11478 / NBRC 16432 / NCIMB 13614 / HKI 0122).